The sequence spans 271 residues: MNSSQISLRMKHGRVNMQKKPSKCSECGKFFTQRSSLTQHQRIHRGEKPYVCSECGSCFRKQSNLTQHLRIHTGEKPYKCNECEKAFQTKAILVQHLRIHTGEKPYKCNECGKAFCQSPSLIKHQRIHTGEKPYKCTECGKAFSQSICLTRHQRSHSGDKPFKCNECGKAFNQSACLMQHQRIHSGEKPYTCTECGKAFTQNSSLVEHERTHTGEKLYKCSECEKTFRKQAHLSEHYRIHTGEKPYECVGCGKSFRHSSALLRHQRLHAGE.

C2H2-type zinc fingers lie at residues 22–44 (SKCSECGKFFTQRSSLTQHQRIH), 50–72 (YVCSECGSCFRKQSNLTQHLRIH), 78–100 (YKCNECEKAFQTKAILVQHLRIH), 106–128 (YKCNECGKAFCQSPSLIKHQRIH), 134–156 (YKCTECGKAFSQSICLTRHQRSH), 162–184 (FKCNECGKAFNQSACLMQHQRIH), 190–212 (YTCTECGKAFTQNSSLVEHERTH), 218–240 (YKCSECEKTFRKQAHLSEHYRIH), and 246–268 (YECVGCGKSFRHSSALLRHQRLH).

It belongs to the krueppel C2H2-type zinc-finger protein family.

It localises to the nucleus. It is found in the nucleolus. In terms of biological role, may be involved in transcriptional regulation. Essential for Golgi structural integrity. This chain is Zinc finger protein 501 (ZNF501), found in Homo sapiens (Human).